Consider the following 382-residue polypeptide: Mitogen-activated protein kinase 9 (382 aa).

The region spanning 26 to 321 (YQQLKPIGSG…VDEALRHPYI (296 aa)) is the Protein kinase domain. ATP is bound by residues 33–38 (GSGAQG) and Lys-55. The active-site Proton acceptor is the Asp-151. Thr-183 carries the phosphothreonine modification. Positions 183–185 (TPY) match the TXY motif. A Phosphotyrosine modification is found at Tyr-185.

Belongs to the protein kinase superfamily. CMGC Ser/Thr protein kinase family. MAP kinase subfamily. The cofactor is Mg(2+). Dually phosphorylated on Thr-183 and Tyr-185, which activates the enzyme. In terms of tissue distribution, expressed in the neuroepithelium of developing brain at stages 16 to 26.

The enzyme catalyses L-seryl-[protein] + ATP = O-phospho-L-seryl-[protein] + ADP + H(+). The catalysed reaction is L-threonyl-[protein] + ATP = O-phospho-L-threonyl-[protein] + ADP + H(+). With respect to regulation, activated by threonine and tyrosine phosphorylation. Responds to activation by environmental stress and pro-inflammatory cytokines by phosphorylating a number of transcription factors, primarily components of AP-1 such as JUN and ATF2 and thus regulates AP-1 transcriptional activity. May play a role in the development of the central nervous system during embryogenesis. May play a role in the regulation of the circadian clock. This Gallus gallus (Chicken) protein is Mitogen-activated protein kinase 9 (MAPK9).